The primary structure comprises 327 residues: 4-hydroxy-2-oxoglutarate aldolase, mitochondrial (327 aa).

A mitochondrion-targeting transit peptide spans 1–25; it reads MLVPRVWSSVRLGLSRVLSRTLRGW. Residue 77-78 coordinates substrate; that stretch reads SN. Lys-196 acts as the Schiff-base intermediate with substrate in catalysis. Substrate-binding residues include Ser-198 and Gly-222.

Belongs to the DapA family. Homotetramer.

It is found in the mitochondrion. The enzyme catalyses (4S)-4-hydroxy-2-oxoglutarate = glyoxylate + pyruvate. It carries out the reaction (4R)-4-hydroxy-2-oxoglutarate = glyoxylate + pyruvate. With respect to regulation, inhibited by divalent cations. Functionally, catalyzes the final step in the metabolic pathway of hydroxyproline. This chain is 4-hydroxy-2-oxoglutarate aldolase, mitochondrial (HOGA1), found in Bos taurus (Bovine).